We begin with the raw amino-acid sequence, 139 residues long: Phosphoribosyl-AMP cyclohydrolase (139 aa).

Position 92 (aspartate 92) interacts with Mg(2+). Residue cysteine 93 participates in Zn(2+) binding. Aspartate 94 and aspartate 96 together coordinate Mg(2+). Residues cysteine 111 and cysteine 118 each coordinate Zn(2+).

Belongs to the PRA-CH family. As to quaternary structure, homodimer. Requires Mg(2+) as cofactor. Zn(2+) serves as cofactor.

The protein resides in the cytoplasm. It catalyses the reaction 1-(5-phospho-beta-D-ribosyl)-5'-AMP + H2O = 1-(5-phospho-beta-D-ribosyl)-5-[(5-phospho-beta-D-ribosylamino)methylideneamino]imidazole-4-carboxamide. It functions in the pathway amino-acid biosynthesis; L-histidine biosynthesis; L-histidine from 5-phospho-alpha-D-ribose 1-diphosphate: step 3/9. In terms of biological role, catalyzes the hydrolysis of the adenine ring of phosphoribosyl-AMP. The sequence is that of Phosphoribosyl-AMP cyclohydrolase from Caulobacter vibrioides (strain ATCC 19089 / CIP 103742 / CB 15) (Caulobacter crescentus).